A 702-amino-acid chain; its full sequence is Polyribonucleotide nucleotidyltransferase (702 aa).

Residues aspartate 487 and aspartate 493 each coordinate Mg(2+). The KH domain occupies proline 554–isoleucine 613. An S1 motif domain is found at glycine 623–lysine 691.

Belongs to the polyribonucleotide nucleotidyltransferase family. In terms of assembly, component of the RNA degradosome, which is a multiprotein complex involved in RNA processing and mRNA degradation. Requires Mg(2+) as cofactor.

It is found in the cytoplasm. It carries out the reaction RNA(n+1) + phosphate = RNA(n) + a ribonucleoside 5'-diphosphate. In terms of biological role, involved in mRNA degradation. Catalyzes the phosphorolysis of single-stranded polyribonucleotides processively in the 3'- to 5'-direction. The chain is Polyribonucleotide nucleotidyltransferase from Stenotrophomonas maltophilia (strain R551-3).